We begin with the raw amino-acid sequence, 253 residues long: Vitamin B12 import ATP-binding protein BtuD (253 aa).

In terms of domain architecture, ABC transporter spans 1-236 (MTNQLMALNQ…NTLSRVFAAD (236 aa)). An ATP-binding site is contributed by 34 to 41 (GPNGSGKS).

Belongs to the ABC transporter superfamily. Vitamin B12 importer (TC 3.A.1.13.1) family. In terms of assembly, the complex is composed of two ATP-binding proteins (BtuD), two transmembrane proteins (BtuC) and a solute-binding protein (BtuF).

The protein resides in the cell inner membrane. The enzyme catalyses an R-cob(III)alamin(out) + ATP + H2O = an R-cob(III)alamin(in) + ADP + phosphate + H(+). Part of the ABC transporter complex BtuCDF involved in vitamin B12 import. Responsible for energy coupling to the transport system. This is Vitamin B12 import ATP-binding protein BtuD from Photorhabdus laumondii subsp. laumondii (strain DSM 15139 / CIP 105565 / TT01) (Photorhabdus luminescens subsp. laumondii).